We begin with the raw amino-acid sequence, 527 residues long: Estrogen receptor beta (527 aa).

The tract at residues 1-145 (MDVKNSPSSL…SPSSKRDAHF (145 aa)) is modulating. Residues serine 84 and serine 102 each carry the phosphoserine; by MAPK modification. 2 NR C4-type zinc fingers span residues 146–166 (CAVC…CEGC) and 182–206 (CPAT…LRKC). Residues 146–211 (CAVCSDYASG…RLRKCYEVGM (66 aa)) constitute a DNA-binding region (nuclear receptor). The 235-residue stretch at 261–495 (SPEQLVLTLL…DLLLEMLNAH (235 aa)) folds into the NR LBD domain. Residues 505–527 (TRSERNLAEDSESKEGSQKPQAQ) are disordered. The segment covering 506-521 (RSERNLAEDSESKEGS) has biased composition (basic and acidic residues).

Belongs to the nuclear hormone receptor family. NR3 subfamily. In terms of assembly, binds DNA as a homodimer. Can form a heterodimer with ESR1. Interacts with NCOA1, NCOA3, NCOA5 and NCOA6 coactivators, leading to a strong increase of transcription of target genes. Interacts with UBE1C and AKAP13. Interacts with DNTTIP2. Interacts with CCDC62 in the presence of estradiol/E2; this interaction seems to enhance the transcription of target genes. Interacts with DNAAF4. Interacts with PRMT2. Interacts with CCAR2 (via N-terminus) in a ligand-independent manner. Interacts with RBM39, in the presence of estradiol (E2). Interacts with STUB1/CHIP. In terms of processing, phosphorylation at Ser-84 and Ser-102 recruits NCOA1.

Its subcellular location is the nucleus. Its function is as follows. Nuclear hormone receptor. Binds estrogens with an affinity similar to that of ESR1/ER-alpha, and activates expression of reporter genes containing estrogen response elements (ERE) in an estrogen-dependent manner. The sequence is that of Estrogen receptor beta (ESR2) from Ovis aries (Sheep).